The chain runs to 274 residues: NH(3)-dependent NAD(+) synthetase (274 aa).

46–53 (GISGGQDS) contacts ATP. Asp-52 provides a ligand contact to Mg(2+). A deamido-NAD(+)-binding site is contributed by Arg-140. Residue Thr-160 participates in ATP binding. Glu-165 is a binding site for Mg(2+). Positions 173 and 180 each coordinate deamido-NAD(+). Positions 189 and 211 each coordinate ATP. 260–261 (HK) contributes to the deamido-NAD(+) binding site.

It belongs to the NAD synthetase family. Homodimer.

It carries out the reaction deamido-NAD(+) + NH4(+) + ATP = AMP + diphosphate + NAD(+) + H(+). Its pathway is cofactor biosynthesis; NAD(+) biosynthesis; NAD(+) from deamido-NAD(+) (ammonia route): step 1/1. Functionally, catalyzes the ATP-dependent amidation of deamido-NAD to form NAD. Uses ammonia as a nitrogen source. This Streptococcus pneumoniae serotype 2 (strain D39 / NCTC 7466) protein is NH(3)-dependent NAD(+) synthetase.